Consider the following 105-residue polypeptide: UPF0145 protein Mevan_1624 (105 aa).

The protein belongs to the UPF0145 family.

The polypeptide is UPF0145 protein Mevan_1624 (Methanococcus vannielii (strain ATCC 35089 / DSM 1224 / JCM 13029 / OCM 148 / SB)).